Reading from the N-terminus, the 517-residue chain is Gamma-1-syntrophin (517 aa).

The 84-residue stretch at 57–140 folds into the PDZ domain; that stretch reads TVTIRRQTVG…EVTLTVSFLK (84 aa). Residues 283 to 390 enclose the PH domain; sequence QIVYMGWCEA…WERAFQTATF (108 aa).

It belongs to the syntrophin family. Isoform 1, but not isoform 2, interacts with the dystrophin protein DMD and related proteins DTNA and DTNB. Interacts with DGKZ. As to expression, brain specific. In CNS, it is expressed in the perikaryon and proximal portion of the neuronal processes. Strong expression in the hippocampus, neuron-rich dendate granule cells, and pyramidal cell layers. Highly expressed in neurons of the cerebral cortex. Also expressed in the cerebellar cortex, deep cerebellar nuclei, thalamus, and basal ganglia. No expression in muscle cells.

It localises to the cytoplasm. The protein localises to the cytoskeleton. Its subcellular location is the nucleus. Its function is as follows. Adapter protein that binds to and probably organizes the subcellular localization of a variety of proteins. May link various receptors to the actin cytoskeleton and the dystrophin glycoprotein complex. May participate in regulating the subcellular location of diacylglycerol kinase-zeta to ensure that diacylglycerol is rapidly inactivated following receptor activation. This chain is Gamma-1-syntrophin (SNTG1), found in Homo sapiens (Human).